We begin with the raw amino-acid sequence, 245 residues long: Putative insertion sequence ATP-binding protein y4pL (245 aa).

106-113 (GPSGVGKS) is an ATP binding site.

It belongs to the IS21/IS1162 putative ATP-binding protein family.

This is Putative insertion sequence ATP-binding protein y4pL from Sinorhizobium fredii (strain NBRC 101917 / NGR234).